A 95-amino-acid polypeptide reads, in one-letter code: Small ubiquitin-related modifier 4 (95 aa).

One can recognise a Ubiquitin-like domain in the interval His-17–Tyr-95. A Glycyl lysine isopeptide (Gly-Lys) (interchain with K-? in acceptor proteins) cross-link involves residue Gly-93. Residues Val-94 to Tyr-95 constitute a propeptide that is removed on maturation.

This sequence belongs to the ubiquitin family. SUMO subfamily. In terms of assembly, interacts with SAE2. Covalently attached to a number of proteins. In contrast to SUMO1, SUMO2 and SUMO3, seems to be insensitive to sentrin-specific proteases due to the presence of Pro-90. This may impair processing to mature form and conjugation to substrates. In terms of tissue distribution, expressed mainly in adult and embryonic kidney. Expressed at various levels in immune tissues, with the highest expression in the lymph node and spleen.

Ubiquitin-like protein which can be covalently attached to target lysines as a monomer. Does not seem to be involved in protein degradation and may modulate protein subcellular localization, stability or activity. Upon oxidative stress, conjugates to various anti-oxidant enzymes, chaperones, and stress defense proteins. May also conjugate to NFKBIA, TFAP2A and FOS, negatively regulating their transcriptional activity, and to NR3C1, positively regulating its transcriptional activity. Covalent attachment to its substrates requires prior activation by the E1 complex SAE1-SAE2 and linkage to the E2 enzyme UBE2I. This Homo sapiens (Human) protein is Small ubiquitin-related modifier 4 (SUMO4).